We begin with the raw amino-acid sequence, 125 residues long: Small ribosomal subunit protein uS12c (125 aa).

The tract at residues 104-125 (ASGVKDRKQGRSKYGGKRPKGD) is disordered. The span at 113-125 (GRSKYGGKRPKGD) shows a compositional bias: basic residues.

The protein belongs to the universal ribosomal protein uS12 family. Part of the 30S ribosomal subunit.

The protein resides in the plastid. Its subcellular location is the chloroplast. Functionally, with S4 and S5 plays an important role in translational accuracy. Located at the interface of the 30S and 50S subunits. The polypeptide is Small ribosomal subunit protein uS12c (rps12) (Emiliania huxleyi (Coccolithophore)).